The chain runs to 288 residues: Bifunctional protein FolD 2 (288 aa).

NADP(+) contacts are provided by residues 166-168 (GRS) and Ser191.

Belongs to the tetrahydrofolate dehydrogenase/cyclohydrolase family. Homodimer.

It carries out the reaction (6R)-5,10-methylene-5,6,7,8-tetrahydrofolate + NADP(+) = (6R)-5,10-methenyltetrahydrofolate + NADPH. The enzyme catalyses (6R)-5,10-methenyltetrahydrofolate + H2O = (6R)-10-formyltetrahydrofolate + H(+). The protein operates within one-carbon metabolism; tetrahydrofolate interconversion. Functionally, catalyzes the oxidation of 5,10-methylenetetrahydrofolate to 5,10-methenyltetrahydrofolate and then the hydrolysis of 5,10-methenyltetrahydrofolate to 10-formyltetrahydrofolate. The protein is Bifunctional protein FolD 2 of Frankia casuarinae (strain DSM 45818 / CECT 9043 / HFP020203 / CcI3).